The chain runs to 133 residues: ATP synthase epsilon chain, chloroplastic (133 aa).

This sequence belongs to the ATPase epsilon chain family. As to quaternary structure, F-type ATPases have 2 components, CF(1) - the catalytic core - and CF(0) - the membrane proton channel. CF(1) has five subunits: alpha(3), beta(3), gamma(1), delta(1), epsilon(1). CF(0) has three main subunits: a, b and c.

It is found in the plastid. The protein localises to the chloroplast thylakoid membrane. In terms of biological role, produces ATP from ADP in the presence of a proton gradient across the membrane. The sequence is that of ATP synthase epsilon chain, chloroplastic from Thalassiosira pseudonana (Marine diatom).